Consider the following 144-residue polypeptide: MKVLVVNGPNLNMLGKRDKNIYGNFSHEDLVKMIEDWGRKNGVEVEVFQSNHEGKILDRLHRLDFDGLVINPGAFTHYSYAIRDALEIVKVPKVEVHISNIHRREEFRRRSVTAEVCDGQISGLGVYGYLLALEYIKKKLEELT.

Tyrosine 22 (proton acceptor) is an active-site residue. Residues asparagine 71, histidine 77, and aspartate 84 each contribute to the substrate site. The active-site Proton donor is histidine 97. Residues 98 to 99 (IS) and arginine 108 each bind substrate.

Belongs to the type-II 3-dehydroquinase family. Homododecamer.

The enzyme catalyses 3-dehydroquinate = 3-dehydroshikimate + H2O. It functions in the pathway metabolic intermediate biosynthesis; chorismate biosynthesis; chorismate from D-erythrose 4-phosphate and phosphoenolpyruvate: step 3/7. Functionally, catalyzes a trans-dehydration via an enolate intermediate. The sequence is that of 3-dehydroquinate dehydratase (aroQ) from Thermotoga maritima (strain ATCC 43589 / DSM 3109 / JCM 10099 / NBRC 100826 / MSB8).